The following is a 269-amino-acid chain: Hydroxyethylthiazole kinase (269 aa).

Met41 contacts substrate. ATP is bound by residues Arg117 and Ser163. Residue Gly190 coordinates substrate.

This sequence belongs to the Thz kinase family. The cofactor is Mg(2+).

It carries out the reaction 5-(2-hydroxyethyl)-4-methylthiazole + ATP = 4-methyl-5-(2-phosphooxyethyl)-thiazole + ADP + H(+). Its pathway is cofactor biosynthesis; thiamine diphosphate biosynthesis; 4-methyl-5-(2-phosphoethyl)-thiazole from 5-(2-hydroxyethyl)-4-methylthiazole: step 1/1. Functionally, catalyzes the phosphorylation of the hydroxyl group of 4-methyl-5-beta-hydroxyethylthiazole (THZ). The sequence is that of Hydroxyethylthiazole kinase from Latilactobacillus sakei subsp. sakei (strain 23K) (Lactobacillus sakei subsp. sakei).